Reading from the N-terminus, the 541-residue chain is Berberine bridge enzyme-like 24 (541 aa).

Residues 1–32 form the signal peptide; sequence MGNSKPLPTISCIIVSVLYFSFYCITPTSSSA. An intrachain disulfide couples cysteine 41 to cysteine 105. Asparagine 62 is a glycosylation site (N-linked (GlcNAc...) asparagine). The region spanning 83–259 is the FAD-binding PCMH-type domain; that stretch reads SMPKPGFIFR…LAWKIKLVPV (177 aa). The 6-(S-cysteinyl)-8alpha-(pros-histidyl)-FAD (His-Cys) cross-link spans 120-184; that stretch reads HDFEALSYVS…KIHGFPAGLC (65 aa). Residues asparagine 309, asparagine 408, and asparagine 435 are each glycosylated (N-linked (GlcNAc...) asparagine).

Belongs to the oxygen-dependent FAD-linked oxidoreductase family. FAD is required as a cofactor. In terms of processing, the FAD cofactor is bound via a bicovalent 6-S-cysteinyl, 8alpha-N1-histidyl FAD linkage.

The protein resides in the secreted. It is found in the cell wall. This Arabidopsis thaliana (Mouse-ear cress) protein is Berberine bridge enzyme-like 24.